A 472-amino-acid polypeptide reads, in one-letter code: Divalent metal cation transporter MntH (472 aa).

11 helical membrane passes run 59-79, 92-112, 144-164, 167-187, 196-216, 233-253, 288-308, 325-345, 377-397, 402-422, and 439-459; these read LLAF…PGNW, MLLS…ALAA, LAII…LNLL, VPII…LLLM, AFVI…IVLA, VVAD…TVMP, LALM…AAVF, LLAP…ALLA, VLTR…YGEQ, LLLL…IPLL, and WLMV…VKLL.

This sequence belongs to the NRAMP family.

It is found in the cell inner membrane. Its function is as follows. H(+)-stimulated, divalent metal cation uptake system. The protein is Divalent metal cation transporter MntH of Xylella fastidiosa (strain Temecula1 / ATCC 700964).